The sequence spans 252 residues: MNDFSLELPVRTNKPRETGQSILIDNGYPLQFFKDAIAGASDYIDFVKFGWGTSLLTKDLEEKISTLKEHDITFFFGGTLFEKYVSQKKVNEFHRYCTYFGCEYIEISNGTLPMTNKEKAAYIADFSDEFLVLSEVGSKDAELASRQSSEEWLEYIVEDMEAGAEKVITEARESGTGGICSSSGDVRFQIVDDIISSDIDINRLIFEAPNKTLQQGFIQKIGPNVNLANIPFHDAIALETLRLGLRSDTFFL.

Belongs to the phosphosulfolactate synthase family.

It catalyses the reaction (2R)-O-phospho-3-sulfolactate = phosphoenolpyruvate + sulfite + H(+). Its function is as follows. Catalyzes the addition of sulfite to phosphoenolpyruvate (PEP) to yield (2R)-phospho-3-sulfolactate (PSL). Is probably involved in the biosynthesis of L-sulfolactate, which is a major constituent of sporulating cells and mature spores. The chain is Phosphosulfolactate synthase (yitD) from Bacillus subtilis (strain 168).